Here is a 171-residue protein sequence, read N- to C-terminus: NADH-quinone oxidoreductase subunit B 2 (171 aa).

[4Fe-4S] cluster contacts are provided by C37, C38, C102, and C132.

The protein belongs to the complex I 20 kDa subunit family. As to quaternary structure, NDH-1 is composed of 14 different subunits. Subunits NuoB, C, D, E, F, and G constitute the peripheral sector of the complex. It depends on [4Fe-4S] cluster as a cofactor.

It is found in the cell inner membrane. It carries out the reaction a quinone + NADH + 5 H(+)(in) = a quinol + NAD(+) + 4 H(+)(out). Functionally, NDH-1 shuttles electrons from NADH, via FMN and iron-sulfur (Fe-S) centers, to quinones in the respiratory chain. Couples the redox reaction to proton translocation (for every two electrons transferred, four hydrogen ions are translocated across the cytoplasmic membrane), and thus conserves the redox energy in a proton gradient. In Chromobacterium violaceum (strain ATCC 12472 / DSM 30191 / JCM 1249 / CCUG 213 / NBRC 12614 / NCIMB 9131 / NCTC 9757 / MK), this protein is NADH-quinone oxidoreductase subunit B 2.